The primary structure comprises 174 residues: uncharacterized protein (174 aa).

The disordered stretch occupies residues 1–55; sequence MGCVVSKSDDIKNENESRQRNQASSSQQPSSSQTPSKQIGIAAKDSEEQPQEVSY. The N-myristoyl glycine moiety is linked to residue G2. Residues 7-19 show a composition bias toward basic and acidic residues; that stretch reads KSDDIKNENESRQ. Positions 20 to 38 are enriched in low complexity; sequence RNQASSSQQPSSSQTPSKQ.

This is an uncharacterized protein from Dictyostelium discoideum (Social amoeba).